The following is a 346-amino-acid chain: Protein RecA (346 aa).

67-74 (GPESSGKT) provides a ligand contact to ATP.

This sequence belongs to the RecA family.

Its subcellular location is the cytoplasm. Functionally, can catalyze the hydrolysis of ATP in the presence of single-stranded DNA, the ATP-dependent uptake of single-stranded DNA by duplex DNA, and the ATP-dependent hybridization of homologous single-stranded DNAs. It interacts with LexA causing its activation and leading to its autocatalytic cleavage. This Mycobacterium marinum (strain ATCC BAA-535 / M) protein is Protein RecA.